The following is a 570-amino-acid chain: Periplasmic trehalase (570 aa).

The N-terminal stretch at 1–34 (MIPPEIRRSVLLQKAIKLALAGTLLTFASFSATA) is a signal peptide. Substrate contacts are provided by residues Arg-159, 166–167 (WD), Asn-203, 212–214 (RSQ), 284–286 (RPE), and Gly-317. Residues Asp-319 and Glu-503 each act as proton donor/acceptor in the active site. Glu-518 serves as a coordination point for substrate. A disordered region spans residues 544–570 (KPCDSVPSTRPASLSATPTKTPSAATQ). A compositionally biased stretch (low complexity) spans 554–570 (PASLSATPTKTPSAATQ).

The protein belongs to the glycosyl hydrolase 37 family. In terms of assembly, monomer.

Its subcellular location is the periplasm. It catalyses the reaction alpha,alpha-trehalose + H2O = alpha-D-glucose + beta-D-glucose. Its function is as follows. Provides the cells with the ability to utilize trehalose at high osmolarity by splitting it into glucose molecules that can subsequently be taken up by the phosphotransferase-mediated uptake system. The chain is Periplasmic trehalase from Salmonella schwarzengrund (strain CVM19633).